The following is a 274-amino-acid chain: tRNA-cytidine(32) 2-sulfurtransferase (274 aa).

Residues 40-45 carry the PP-loop motif motif; it reads SGGKDS. [4Fe-4S] cluster is bound by residues cysteine 115, cysteine 118, and cysteine 206.

The protein belongs to the TtcA family. As to quaternary structure, homodimer. Mg(2+) is required as a cofactor. Requires [4Fe-4S] cluster as cofactor.

Its subcellular location is the cytoplasm. The catalysed reaction is cytidine(32) in tRNA + S-sulfanyl-L-cysteinyl-[cysteine desulfurase] + AH2 + ATP = 2-thiocytidine(32) in tRNA + L-cysteinyl-[cysteine desulfurase] + A + AMP + diphosphate + H(+). It participates in tRNA modification. Functionally, catalyzes the ATP-dependent 2-thiolation of cytidine in position 32 of tRNA, to form 2-thiocytidine (s(2)C32). The sulfur atoms are provided by the cysteine/cysteine desulfurase (IscS) system. The chain is tRNA-cytidine(32) 2-sulfurtransferase from Pseudomonas putida (strain GB-1).